The chain runs to 457 residues: Reticulon-like protein B18 (457 aa).

The tract at residues A94 to V183 is disordered. The segment covering L124 to T136 has biased composition (basic and acidic residues). The segment covering N149–K163 has biased composition (basic residues). Low complexity predominate over residues S166–V183. Positions I195–T385 constitute a Reticulon domain. The next 4 helical transmembrane spans lie at T208–F228, F230–S250, Y314–I334, and F377–I397. The disordered stretch occupies residues D407 to Y457. Residues E413 to E439 are compositionally biased toward basic and acidic residues.

Its subcellular location is the endoplasmic reticulum membrane. In Arabidopsis thaliana (Mouse-ear cress), this protein is Reticulon-like protein B18 (RTNLB18).